Consider the following 715-residue polypeptide: MAAAALLAAVDRNQLRRVPILLLQPREWPWKHRTVKYGTTPGGSITKVLIANRGEIACRVIRTARKMGVQSVAVYSEADRNSMHVDMADEAYSIGPAPSQQSYLAMEKIIQVAKSSAAQAIHPGYGFLSENMEFAEFCKQEGIIFIGPPSTAIRDMGIKSTSKSIMAAAGVPVVEGYHGNDQSDECLKEHAGKIGYPVMIKAIRGGGGKGMRIIRSEKEFQEQLESARREAKKSFNDDAMLIEKFVDTPRHVEVQVFGDHHGNAVYLFERDCSVQRRHQKIIEEAPAPGIDPEVRRRLGEAAVRAAKAVNYVGAGTVEFIMDSKHNFYFMEMNTRLQVEHPVTEMITGTDLVEWQLRIAAGEKIPLSQEEIPLQGHAFEARIYAEDPDNNFMPGAGPLVHLSTPPPDMSTRIETGVRQGDEVSVHYDPMIAKLVVWASDRQSALSKLRYSLHQYNIVGLRTNVDFLLRLSGHSEFEAGNVHTDFIPQHHKDLLPTHSTIAKESVCQAALGLILKEKEMTSAFKLHTQDQFSPFSFSSGRRLNISYTRNMTLRSGKNDIIIAVTYNRDGSYDMQIENKLFRVLGDLSNEDGYTYLKSSVNGVASKSKFILLDNTIYLFSMEGSIEVGIPVPKYLSPVSAEGTQGGTIAPMTGTIEKVFVKAGDRVKAGDALMVMIAMKMEHTIKAPKDGRIKKVFFSEGAQANRHAPLVEFEEEEV.

Residues 1-38 constitute a mitochondrion transit peptide; that stretch reads MAAAALLAAVDRNQLRRVPILLLQPREWPWKHRTVKYG. Residues 45–490 enclose the Biotin carboxylation domain; the sequence is ITKVLIANRG…HTDFIPQHHK (446 aa). Lysine 159 lines the ATP pocket. Positions 163–360 constitute an ATP-grasp domain; it reads KSIMAAAGVP…LVEWQLRIAA (198 aa). N6-acetyllysine is present on lysine 193. Residues lysine 201 and 207-208 each bind ATP; that span reads GG. Lysine 233 carries the post-translational modification N6-acetyllysine. Residues histidine 251, histidine 278, and glutamate 318 each coordinate ATP. The active site involves arginine 335. Lysine 490 carries the N6-acetyllysine modification. Lysine 577 is subject to N6-acetyllysine; alternate. At lysine 577 the chain carries N6-succinyllysine; alternate. The Biotinyl-binding domain maps to 622–711; it reads SIEVGIPVPK…NRHAPLVEFE (90 aa). Lysine 677 is subject to N6-biotinyllysine.

Probably a dodecamer composed of six biotin-containing alpha subunits (MCCC1) and six beta (MCCC2) subunits. Interacts (via the biotin carboxylation domain) with SIRT4. It depends on biotin as a cofactor. Acetylated.

The protein resides in the mitochondrion matrix. The catalysed reaction is 3-methylbut-2-enoyl-CoA + hydrogencarbonate + ATP = 3-methyl-(2E)-glutaconyl-CoA + ADP + phosphate + H(+). Its pathway is amino-acid degradation; L-leucine degradation; (S)-3-hydroxy-3-methylglutaryl-CoA from 3-isovaleryl-CoA: step 2/3. Its function is as follows. Biotin-attachment subunit of the 3-methylcrotonyl-CoA carboxylase, an enzyme that catalyzes the conversion of 3-methylcrotonyl-CoA to 3-methylglutaconyl-CoA, a critical step for leucine and isovaleric acid catabolism. The chain is Methylcrotonoyl-CoA carboxylase subunit alpha, mitochondrial from Rattus norvegicus (Rat).